Reading from the N-terminus, the 449-residue chain is Chromosomal replication initiator protein DnaA (449 aa).

Residues 1–75 (MDTNNDIEKR…EILSQNKVGM (75 aa)) are domain I, interacts with DnaA modulators. The domain II stretch occupies residues 75 to 106 (MHLAHSVDVRIEVASKVHVSDHSNINYKATKS). The interval 107–321 (SIKDSYTFEN…GAIIKISVNA (215 aa)) is domain III, AAA+ region. ATP contacts are provided by Gly-151, Gly-153, Lys-154, and Thr-155. Residues 322 to 449 (NLMNAPIDLN…LNELNDKKQH (128 aa)) form a domain IV, binds dsDNA region.

It belongs to the DnaA family. As to quaternary structure, oligomerizes as a right-handed, spiral filament on DNA at oriC.

The protein resides in the cytoplasm. Plays an essential role in the initiation and regulation of chromosomal replication. ATP-DnaA binds to the origin of replication (oriC) to initiate formation of the DNA replication initiation complex once per cell cycle. Binds the DnaA box (a 9 base pair repeat at the origin) and separates the double-stranded (ds)DNA. Forms a right-handed helical filament on oriC DNA; dsDNA binds to the exterior of the filament while single-stranded (ss)DNA is stabiized in the filament's interior. The ATP-DnaA-oriC complex binds and stabilizes one strand of the AT-rich DNA unwinding element (DUE), permitting loading of DNA polymerase. After initiation quickly degrades to an ADP-DnaA complex that is not apt for DNA replication. Binds acidic phospholipids. The sequence is that of Chromosomal replication initiator protein DnaA from Helicobacter acinonychis (strain Sheeba).